The following is a 108-amino-acid chain: Protein RnfH (108 aa).

The protein belongs to the UPF0125 (RnfH) family.

This Laribacter hongkongensis (strain HLHK9) protein is Protein RnfH.